Here is a 572-residue protein sequence, read N- to C-terminus: Potassium-transporting ATPase potassium-binding subunit (572 aa).

The next 10 helical transmembrane spans lie at 6-26 (ILFVVFIFTLVIITKPLGTYI), 66-86 (FFSLLSFSIMAFIFVFVVLLL), 135-155 (ALAVQNFVSAAVGLCVAIVLI), 177-197 (IFWILLPISIIIAIVYIFQGV), 251-271 (TIITNYIQMVSIFAIAAALTY), 283-303 (GWMIFAVMLVLFVISLMVMTI), 382-402 (IFGGIGAGFYGFFMFLMLAVF), 428-448 (MFALLISPCCVLVFTGLAAVI), 493-513 (ITIALSMLIGRFGVIFAVMML), and 537-557 (FIFSVLVFFTIVLIGGLTIFP).

Belongs to the KdpA family. The system is composed of three essential subunits: KdpA, KdpB and KdpC.

The protein localises to the cell inner membrane. Its function is as follows. Part of the high-affinity ATP-driven potassium transport (or Kdp) system, which catalyzes the hydrolysis of ATP coupled with the electrogenic transport of potassium into the cytoplasm. This subunit binds the periplasmic potassium ions and delivers the ions to the membrane domain of KdpB through an intramembrane tunnel. The chain is Potassium-transporting ATPase potassium-binding subunit from Francisella philomiragia subsp. philomiragia (strain ATCC 25017 / CCUG 19701 / FSC 153 / O#319-036).